The primary structure comprises 318 residues: MATDGTGVVTVYGSGTNGAALLEPSNHKSATFSVKVGLAQMLRGGVIMDVVTPEQARIAEEAGACAVMALERVPADIRAQGGVARMSDPGLIRDIKRAVTIPVMAKARIGHFVEAQILEAIGVDYVDESEVLTLADDAHHINKHNFRVPFVCGCRDLGEALRRIREGAAMIRTKGEAGTGNVVEAVRHVRSVMGDIRALRNMDDDEVFSYAKRIAAPYDLVMQTKQLGRLPVVQFAAGGVATPADAALMMQLGCDGVFVGSGIFKSGDPARRARAIVQAVTHYSDPKILAEVSSGLGEAMVGINLSDPKVERFAARSE.

Asp49 lines the D-ribose 5-phosphate pocket. Lys106 serves as the catalytic Schiff-base intermediate with D-ribose 5-phosphate. Gly178 provides a ligand contact to D-ribose 5-phosphate. Residue Arg190 coordinates D-glyceraldehyde 3-phosphate. D-ribose 5-phosphate-binding positions include Gly239 and Gly260–Ser261.

It belongs to the PdxS/SNZ family.

The catalysed reaction is aldehydo-D-ribose 5-phosphate + D-glyceraldehyde 3-phosphate + L-glutamine = pyridoxal 5'-phosphate + L-glutamate + phosphate + 3 H2O + H(+). It participates in cofactor biosynthesis; pyridoxal 5'-phosphate biosynthesis. Catalyzes the formation of pyridoxal 5'-phosphate from ribose 5-phosphate (RBP), glyceraldehyde 3-phosphate (G3P) and ammonia. The ammonia is provided by PDX2. Can also use ribulose 5-phosphate and dihydroxyacetone phosphate as substrates, resulting from enzyme-catalyzed isomerization of RBP and G3P, respectively. Also plays an indirect role in resistance to singlet oxygen-generating photosensitizers. In Oryza sativa subsp. japonica (Rice), this protein is Probable pyridoxal 5'-phosphate synthase subunit PDX1.1 (PDX11).